The following is a 195-amino-acid chain: Granulocyte colony-stimulating factor (195 aa).

The signal sequence occupies residues 1 to 21 (MKLMVLQLLLWHSALWTVHEA). 2 disulfides stabilise this stretch: Cys57/Cys63 and Cys85/Cys95. An O-linked (GalNAc...) threonine glycan is attached at Thr154.

The protein belongs to the IL-6 superfamily. As to quaternary structure, monomer. In terms of processing, O-glycosylated.

The protein localises to the secreted. Granulocyte/macrophage colony-stimulating factors are cytokines that act in hematopoiesis by controlling the production, differentiation, and function of 2 related white cell populations of the blood, the granulocytes and the monocytes-macrophages. This CSF induces granulocytes. The polypeptide is Granulocyte colony-stimulating factor (CSF3) (Bos taurus (Bovine)).